The sequence spans 453 residues: Ankyrin repeat and SOCS box protein 16 (453 aa).

ANK repeat units lie at residues 56 to 85, 110 to 139, 142 to 171, 175 to 204, 209 to 238, 242 to 279, and 283 to 312; these read CRDPAVHQALFSGNLQQVQALFQDEEAANM, KQTAPLAIATARGYTDCARHLIRQGAELDA, GGRAALHEACARAQFDCVRLLLTFGAKANV, EGTTPLHLCTIPESLQCAKLLLEAGATVNL, SQETPLHVAAARGLEQHVALYLEHGADVGL, QGETALNTACAGAEGPGSCRRHQAAARRLLEAGADARA, and KRHTPLHNACANGCGGLAELLLRYGARAEV. One can recognise an SOCS box domain in the interval 398-450; the sequence is YSSALCMVNQPRQLQHLARLAVRARLGSRCRQGATRLPLPPLLRDYLLLRVEG.

It belongs to the ankyrin SOCS box (ASB) family.

It participates in protein modification; protein ubiquitination. Functionally, may be a substrate-recognition component of a SCF-like ECS (Elongin-Cullin-SOCS-box protein) E3 ubiquitin-protein ligase complex which mediates the ubiquitination and subsequent proteasomal degradation of target proteins. The polypeptide is Ankyrin repeat and SOCS box protein 16 (ASB16) (Homo sapiens (Human)).